Reading from the N-terminus, the 95-residue chain is Aspartyl/glutamyl-tRNA(Asn/Gln) amidotransferase subunit C (95 aa).

The protein belongs to the GatC family. In terms of assembly, heterotrimer of A, B and C subunits.

The enzyme catalyses L-glutamyl-tRNA(Gln) + L-glutamine + ATP + H2O = L-glutaminyl-tRNA(Gln) + L-glutamate + ADP + phosphate + H(+). It carries out the reaction L-aspartyl-tRNA(Asn) + L-glutamine + ATP + H2O = L-asparaginyl-tRNA(Asn) + L-glutamate + ADP + phosphate + 2 H(+). Allows the formation of correctly charged Asn-tRNA(Asn) or Gln-tRNA(Gln) through the transamidation of misacylated Asp-tRNA(Asn) or Glu-tRNA(Gln) in organisms which lack either or both of asparaginyl-tRNA or glutaminyl-tRNA synthetases. The reaction takes place in the presence of glutamine and ATP through an activated phospho-Asp-tRNA(Asn) or phospho-Glu-tRNA(Gln). The chain is Aspartyl/glutamyl-tRNA(Asn/Gln) amidotransferase subunit C from Chlorobium phaeobacteroides (strain DSM 266 / SMG 266 / 2430).